A 534-amino-acid polypeptide reads, in one-letter code: Peptide chain release factor 3 (534 aa).

The tr-type G domain maps to 9–278 (SRRRTFAIIS…FFVEHAPPPQ (270 aa)). GTP is bound by residues 18–25 (SHPDAGKT), 86–90 (DTPGH), and 140–143 (NKLD).

Belongs to the TRAFAC class translation factor GTPase superfamily. Classic translation factor GTPase family. PrfC subfamily.

It is found in the cytoplasm. Its function is as follows. Increases the formation of ribosomal termination complexes and stimulates activities of RF-1 and RF-2. It binds guanine nucleotides and has strong preference for UGA stop codons. It may interact directly with the ribosome. The stimulation of RF-1 and RF-2 is significantly reduced by GTP and GDP, but not by GMP. This is Peptide chain release factor 3 from Stenotrophomonas maltophilia (strain R551-3).